Consider the following 310-residue polypeptide: uncharacterized protein (310 aa).

Residues 1–70 (MAGNSQRRGA…ARGRTDETET (70 aa)) are disordered. Over residues 49–62 (AAKRAKAQQRRPAR) the composition is skewed to basic residues. 3 residues coordinate S-adenosyl-L-methionine: G262, V282, and L291.

This sequence belongs to the class IV-like SAM-binding methyltransferase superfamily. RNA methyltransferase TrmH family.

This is an uncharacterized protein from Mycobacterium marinum (strain ATCC BAA-535 / M).